We begin with the raw amino-acid sequence, 865 residues long: DNA topoisomerase 3-beta (865 aa).

Residues 6-151 form the Toprim domain; that stretch reads RVLMVAEKPS…KVYRARFSSV (146 aa). The Mg(2+) site is built by glutamate 12, aspartate 116, and aspartate 118. Residues 167–587 form the Topo IA-type catalytic domain; it reads NRDEALAVDA…HVIQQFRRKF (421 aa). An interaction with DNA region spans residues 209-214; sequence SYGPCQ. Residue tyrosine 331 is the O-(5'-phospho-DNA)-tyrosine intermediate of the active site. Basic residues predominate over residues 833-853; sequence RRGGRGRGRGRGRGRGGRRGS. A disordered region spans residues 833–865; the sequence is RRGGRGRGRGRGRGRGGRRGSKSVDPKMSFRDF. Basic and acidic residues predominate over residues 854 to 865; sequence KSVDPKMSFRDF.

This sequence belongs to the type IA topoisomerase family. The cofactor is Mg(2+).

The enzyme catalyses ATP-independent breakage of single-stranded DNA, followed by passage and rejoining.. In terms of biological role, releases the supercoiling and torsional tension of DNA introduced during the DNA replication and transcription by transiently cleaving and rejoining one strand of the DNA duplex. Introduces a single-strand break via transesterification at a target site in duplex DNA. The scissile phosphodiester is attacked by the catalytic tyrosine of the enzyme, resulting in the formation of a DNA-(5'-phosphotyrosyl)-enzyme intermediate and the expulsion of a 3'-OH DNA strand. The free DNA strand than undergoes passage around the unbroken strand thus removing DNA supercoils. Finally, in the religation step, the DNA 3'-OH attacks the covalent intermediate to expel the active-site tyrosine and restore the DNA phosphodiester backbone. The chain is DNA topoisomerase 3-beta from Arabidopsis thaliana (Mouse-ear cress).